The chain runs to 311 residues: Probable manganese-dependent inorganic pyrophosphatase (311 aa).

Residues histidine 9, aspartate 13, aspartate 15, aspartate 75, histidine 97, and aspartate 149 each coordinate Mn(2+).

Belongs to the PPase class C family. The cofactor is Mn(2+).

It is found in the cytoplasm. The catalysed reaction is diphosphate + H2O = 2 phosphate + H(+). The chain is Probable manganese-dependent inorganic pyrophosphatase from Lactobacillus gasseri (strain ATCC 33323 / DSM 20243 / BCRC 14619 / CIP 102991 / JCM 1131 / KCTC 3163 / NCIMB 11718 / NCTC 13722 / AM63).